The sequence spans 367 residues: 2-aminoethylphosphonate--pyruvate transaminase (367 aa).

Lys-194 is modified (N6-(pyridoxal phosphate)lysine).

The protein belongs to the class-V pyridoxal-phosphate-dependent aminotransferase family. PhnW subfamily. As to quaternary structure, homodimer. Pyridoxal 5'-phosphate serves as cofactor.

It catalyses the reaction (2-aminoethyl)phosphonate + pyruvate = phosphonoacetaldehyde + L-alanine. In terms of biological role, involved in phosphonate degradation. The protein is 2-aminoethylphosphonate--pyruvate transaminase of Klebsiella pneumoniae subsp. pneumoniae (strain ATCC 700721 / MGH 78578).